A 383-amino-acid chain; its full sequence is WEGRPQELGGKEIPLCAGCDQHILDRFILKALDRHWHSKCLKCSDCHTPLAERCFSRGESLYCKDDFFKRFGTKCAACQLGIPPTQVVRRAQDFVYHLHCFACVVCKRQLATGDEFYLMEDSRLVCKADYETAKQREAEATAKRPRTTITAKQLETLKSAYNTSPKPARHVREQLSSETGLDMRVVQVWFQNRRAKEKRLKKDAGRQRWGQYFRNMKRARGGSKSDKDSVQEEGQDSDAEVSFTDEPSMAEMGPANGLYGGLGEPAPALGRPSGAPGSFPLEHGGLAGPEQYGELRPSSPYGVPSSPAALQSLPGPQPLLSSLVYPEAGLGLVPAGPPGGPPPMRVLAGNGPSSDLSTGSSGGYPDFPASPASWLDEVDHAQF.

2 consecutive LIM zinc-binding domains span residues 14-73 (PLCA…RFGT) and 73-136 (TKCA…AKQR). Thr-48 is modified (phosphothreonine). Ser-56 bears the Phosphoserine mark. A DNA-binding region (homeobox) is located at residues 142 to 201 (AKRPRTTITAKQLETLKSAYNTSPKPARHVREQLSSETGLDMRVVQVWFQNRRAKEKRLK). Residues 197-383 (EKRLKKDAGR…WLDEVDHAQF (187 aa)) form a disordered region. Phosphotyrosine is present on Tyr-212. Ser-223 is modified (phosphoserine). The segment covering 307–334 (PAALQSLPGPQPLLSSLVYPEAGLGLVP) has biased composition (low complexity). Positions 335-344 (AGPPGGPPPM) are enriched in pro residues.

Interacts with POU1F1. At neuronal promoters, interacts with LDB1, in motor neurons LDB1 is displaced by ISL1 and a ternary complex is formed in which ISL1 contacts both LHX3 and LDB1; allosteric structural changes in the DNA binding domain of LHX3, induced by the ISL1-LHX3 interaction, may explain differences in sequence specificity of the different complexes. Interacts with LDB2. May interact with CITED2/MRG1.

The protein resides in the nucleus. In terms of biological role, transcription factor. Recognizes and binds to the consensus sequence motif 5'-AATTAATTA-3' in the regulatory elements of target genes, such as glycoprotein hormones alpha chain CGA and visual system homeobox CHX10, positively modulating transcription; transcription can be co-activated by LDB2. Synergistically enhances transcription from the prolactin promoter in cooperation with POU1F1/Pit-1. Required for the establishment of the specialized cells of the pituitary gland and the nervous system. Involved in the development of interneurons and motor neurons in cooperation with LDB1 and ISL1. The sequence is that of LIM/homeobox protein Lhx3 (LHX3) from Sus scrofa (Pig).